Reading from the N-terminus, the 646-residue chain is UvrABC system protein C (646 aa).

The 80-residue stretch at 16-95 (VEPGVYRFRD…IKEFDPRFNV (80 aa)) folds into the GIY-YIG domain. Residues 208–243 (DRFARALEQQMNAAAEQLDFERAARLRDDLSALKRA) form the UVR domain.

Belongs to the UvrC family. Interacts with UvrB in an incision complex.

The protein localises to the cytoplasm. Its function is as follows. The UvrABC repair system catalyzes the recognition and processing of DNA lesions. UvrC both incises the 5' and 3' sides of the lesion. The N-terminal half is responsible for the 3' incision and the C-terminal half is responsible for the 5' incision. This is UvrABC system protein C from Mycobacterium bovis (strain BCG / Pasteur 1173P2).